The primary structure comprises 296 residues: Glucokinase (296 aa).

This sequence belongs to the ROK (NagC/XylR) family. Homodimer. The cofactor is a divalent metal cation.

The enzyme catalyses D-glucose + ATP = D-glucose 6-phosphate + ADP + H(+). Functionally, catalyzes the phosphorylation of D-glucose to D-glucose 6-phosphate using ATP as the phosphate donor. Has a broad hexose specificity, and in addition to glucose, which shows the highest catalytic efficiency, it can also phosphorylate fructose, mannose, galactose and sorbitol. Can also use CTP, GTP or UTP as phosphoryl donor. This is Glucokinase from Pyrobaculum calidifontis (strain DSM 21063 / JCM 11548 / VA1).